Consider the following 481-residue polypeptide: uncharacterized protein (481 aa).

To M.tuberculosis RV2411c.

This is an uncharacterized protein from Synechocystis sp. (strain ATCC 27184 / PCC 6803 / Kazusa).